Reading from the N-terminus, the 363-residue chain is Oxygen-dependent coproporphyrinogen-III oxidase (363 aa).

Serine 119 provides a ligand contact to substrate. A divalent metal cation-binding residues include histidine 123 and histidine 133. Histidine 133 acts as the Proton donor in catalysis. 135 to 137 (NYR) contributes to the substrate binding site. Positions 167 and 197 each coordinate a divalent metal cation. Residues 287–322 (YVEFNLVWDRGTIFGLQTNGRTESILMSLPPLVRWE) form an important for dimerization region.

Belongs to the aerobic coproporphyrinogen-III oxidase family. In terms of assembly, homodimer. The cofactor is a divalent metal cation.

Its subcellular location is the cytoplasm. It carries out the reaction coproporphyrinogen III + O2 + 2 H(+) = protoporphyrinogen IX + 2 CO2 + 2 H2O. It functions in the pathway porphyrin-containing compound metabolism; protoporphyrin-IX biosynthesis; protoporphyrinogen-IX from coproporphyrinogen-III (O2 route): step 1/1. Functionally, involved in the heme and chlorophyll biosynthesis. Catalyzes the aerobic oxidative decarboxylation of propionate groups of rings A and B of coproporphyrinogen-III to yield the vinyl groups in protoporphyrinogen-IX. This chain is Oxygen-dependent coproporphyrinogen-III oxidase, found in Parasynechococcus marenigrum (strain WH8102).